A 134-amino-acid chain; its full sequence is MEYDDMLDRAMEETPEIDGTSERFEVPDPDIRQEGNVTVYENFQSTCSRLGREDDHVMKFLQNDLGTSGHIDESGRVRLTGEFDATRIEASIDEYVDEFVLCSECGLPDTQLEREQGALLLRCEACGARSATSE.

The span at 1–12 (MEYDDMLDRAME) shows a compositional bias: basic and acidic residues. The interval 1 to 28 (MEYDDMLDRAMEETPEIDGTSERFEVPD) is disordered.

Belongs to the eIF-2-beta/eIF-5 family. In terms of assembly, heterotrimer composed of an alpha, a beta and a gamma chain.

In terms of biological role, eIF-2 functions in the early steps of protein synthesis by forming a ternary complex with GTP and initiator tRNA. The chain is Translation initiation factor 2 subunit beta from Haloarcula marismortui (strain ATCC 43049 / DSM 3752 / JCM 8966 / VKM B-1809) (Halobacterium marismortui).